Reading from the N-terminus, the 142-residue chain is Large ribosomal subunit protein uL13 (142 aa).

It belongs to the universal ribosomal protein uL13 family. Part of the 50S ribosomal subunit.

Its function is as follows. This protein is one of the early assembly proteins of the 50S ribosomal subunit, although it is not seen to bind rRNA by itself. It is important during the early stages of 50S assembly. The sequence is that of Large ribosomal subunit protein uL13 from Desulfotalea psychrophila (strain LSv54 / DSM 12343).